We begin with the raw amino-acid sequence, 377 residues long: Transcription factor Sox-17-alpha-B (377 aa).

Disordered regions lie at residues 1–20 (MSSP…KCSV) and 31–57 (QWSE…AEGR). A compositionally biased stretch (basic and acidic residues) spans 42 to 57 (GKLKSDANSRSKAEGR). The HMG box DNA-binding region spans 58 to 126 (IRRPMNAFMV…QHMQDHPNYK (69 aa)). Residues 262–376 (GSPVEGMMAC…TAVYYCNYPS (115 aa)) enclose the Sox C-terminal domain. The disordered stretch occupies residues 282–321 (MYLPGSTRHHQHPQAGQPSPPPEAQQLGRADQTQQADMMA). The short motif at 325–333 (TEFEQYLSY) is the 9aaTAD element. A required for transcriptional activity and interaction with ctnnb1 region spans residues 326–331 (EFEQYL).

As to quaternary structure, interacts (via C-terminus) with ctnnb1/beta-catenin (via Armadillo repeats); this interaction is required for inhibition of wnt-signaling. Enriched in the embryonic endoderm. Expressed in the embryonic gut, with strong expression in the posterior gut during tailbud stages. Expressed at a low level in the adult kidney and spleen.

Its subcellular location is the nucleus. In terms of biological role, transcription activator. Binds to the DNA sequence 5'-AACAAT-3'. All of the sox17 proteins are required for embryonic endoderm development and gastrulation movements, and show some redundancy in function. In addition, the sox17 proteins have distinct but overlapping roles in later gut development. Acts downstream of vegt-signaling in endoderm differentiation to induce a range of endodermal genes both directly (including endodermin and dhh/chh) and indirectly. Also represses wnt-responsive genes to inhibit wnt/beta-catenin signaling. This chain is Transcription factor Sox-17-alpha-B (sox17a-b), found in Xenopus laevis (African clawed frog).